The following is a 164-amino-acid chain: tRNA (cytidine(34)-2'-O)-methyltransferase (164 aa).

The S-adenosyl-L-methionine site is built by Met80, Gly102, Val124, and Ser132.

The protein belongs to the class IV-like SAM-binding methyltransferase superfamily. RNA methyltransferase TrmH family. TrmL subfamily. In terms of assembly, homodimer.

The protein localises to the cytoplasm. The enzyme catalyses cytidine(34) in tRNA + S-adenosyl-L-methionine = 2'-O-methylcytidine(34) in tRNA + S-adenosyl-L-homocysteine + H(+). The catalysed reaction is 5-carboxymethylaminomethyluridine(34) in tRNA(Leu) + S-adenosyl-L-methionine = 5-carboxymethylaminomethyl-2'-O-methyluridine(34) in tRNA(Leu) + S-adenosyl-L-homocysteine + H(+). In terms of biological role, methylates the ribose at the nucleotide 34 wobble position in the two leucyl isoacceptors tRNA(Leu)(CmAA) and tRNA(Leu)(cmnm5UmAA). Catalyzes the methyl transfer from S-adenosyl-L-methionine to the 2'-OH of the wobble nucleotide. The polypeptide is tRNA (cytidine(34)-2'-O)-methyltransferase (Polaromonas sp. (strain JS666 / ATCC BAA-500)).